The sequence spans 363 residues: Peptide chain release factor 1 (363 aa).

Q237 carries the post-translational modification N5-methylglutamine. Basic and acidic residues predominate over residues 284–297; sequence ERAKQQSERSEQRR. The segment at 284–306 is disordered; the sequence is ERAKQQSERSEQRRLAVGSGDRS.

It belongs to the prokaryotic/mitochondrial release factor family. Methylated by PrmC. Methylation increases the termination efficiency of RF1.

The protein resides in the cytoplasm. Peptide chain release factor 1 directs the termination of translation in response to the peptide chain termination codons UAG and UAA. This Halorhodospira halophila (strain DSM 244 / SL1) (Ectothiorhodospira halophila (strain DSM 244 / SL1)) protein is Peptide chain release factor 1.